We begin with the raw amino-acid sequence, 836 residues long: Transcriptional regulatory protein UME6 (836 aa).

Residues 1 to 14 (MLDKARSQSKHMDE) show a composition bias toward basic and acidic residues. Disordered stretches follow at residues 1-77 (MLDK…IESL), 92-168 (STCA…CNGH), 218-332 (HLPP…DDQC), and 381-464 (NESS…GFFY). Polar residues-rich tracts occupy residues 39 to 48 (SRATLMNSSQ), 61 to 77 (GANS…IESL), and 92 to 112 (STCA…SLKV). At Ser114 the chain carries Phosphoserine. A compositionally biased stretch (basic and acidic residues) spans 117–126 (DIKDDPKEND). A phosphoserine mark is found at Ser141, Ser150, and Ser228. Low complexity predominate over residues 226-236 (AVSSPGTTAAG). A compositionally biased stretch (polar residues) spans 258–272 (TSANKNNGKTTNSPM). A compositionally biased stretch (low complexity) spans 273 to 305 (SILSRNNSTNNNDNNSIQSSDSRESSNNNEIGG). Phosphoserine is present on residues Ser316 and Ser318. A compositionally biased stretch (polar residues) spans 316–325 (SPSNDSQVQH). Residues 381–398 (NESSSNNASSNTDTPTNS) show a composition bias toward low complexity. The span at 399 to 414 (RHANTSSSITSRNNFQ) shows a compositional bias: polar residues. Over residues 426 to 446 (PTSASSFTSTNNNNPQRNNIN) the composition is skewed to low complexity. Residues 508 to 594 (NSASSSTKLD…QPIFESNNST (87 aa)) form an SIN3-binding region. Residues 636-766 (NGKRIDRRLS…ATSSTSQGTR (131 aa)) are disordered. Ser645 carries the post-translational modification Phosphoserine. Over residues 670-679 (VASQTNSDYN) the composition is skewed to polar residues. The span at 680–702 (SLGESSTSSAPSSPSLKASSGLA) shows a compositional bias: low complexity. A compositionally biased stretch (basic residues) spans 718–739 (SKGKNVKPKAKSKAKQSSKKRP). Low complexity predominate over residues 740 to 751 (NNTTSKSKANNS). A DNA-binding region (zn(2)-C6 fungal-type) is located at residues 771 to 798 (CWICRLRKKKCTEERPHCFNCERLKLDC).

Component of the RPD3C(L) complex composed of at least ASH1, CTI6, DEP1, PHO23, RPD3, RXT2, RXT3, SAP30, SDS3, SIN3, UME1 and UME6. Interacts with RIM11, MCK1 and IME1. Phosphorylated by RIM11 and MCK1.

It is found in the nucleus. Component of the RPD3C(L) histone deacetylase complex (HDAC) responsible for the deacetylation of lysine residues on the N-terminal part of the core histones (H2A, H2B, H3 and H4). Histone deacetylation gives a tag for epigenetic repression and plays an important role in transcriptional regulation, cell cycle progression and developmental events. Binds to the URS1 site (5'-AGCCGCCGA-3') and recruits the RPD3 histone deacetylase complex to the promoters to negatively regulate the expression of many genes including CAR1 (arginase), several required for sporulation, mating type switching, inositol metabolism, and oxidative carbon metabolism. Also recruits the ISW2 chromatin remodeling complex to promoters in a second gene repression pathway. Associates with the master regulator of meiosis IME1 in order to activate the expression of meiosis genes. Has both a positive and negative role in regulating phospholipid biosynthesis. The chain is Transcriptional regulatory protein UME6 (UME6) from Saccharomyces cerevisiae (strain ATCC 204508 / S288c) (Baker's yeast).